The sequence spans 748 residues: CCR4-NOT transcription complex subunit 10-A (748 aa).

Basic and acidic residues predominate over residues 1–17; sequence MAADKAGEQGAEKHEDS. Disordered regions lie at residues 1–25, 184–205, 483–524, and 605–635; these read MAADKAGEQGAEKHEDSANCSGISD, SNNKNGKNNETNSNANNREPFA, KQEN…PPSS, and VSLGVSSNEQEQGSDKGENEPMESVGKQMPQ. A compositionally biased stretch (low complexity) spans 185–200; it reads NNKNGKNNETNSNANN. Polar residues-rich tracts occupy residues 487–509 and 605–615; these read GSKTSSQTGNTDSGGESSEVCSN and VSLGVSSNEQE.

Belongs to the CNOT10 family. As to quaternary structure, component of the CCR4-NOT complex. cnot10 and cnot11 form a subcomplex docked to the cnot1 scaffold.

It localises to the cytoplasm. It is found in the nucleus. Component of the CCR4-NOT complex which is one of the major cellular mRNA deadenylases and is linked to various cellular processes including bulk mRNA degradation, miRNA-mediated repression, translational repression during translational initiation and general transcription regulation. Additional complex functions may be a consequence of its influence on mRNA expression. Is not required for association of CNOT7 to the CCR4-NOT complex. The sequence is that of CCR4-NOT transcription complex subunit 10-A (cnot10-a) from Xenopus laevis (African clawed frog).